A 440-amino-acid chain; its full sequence is D-serine dehydratase (440 aa).

At K116 the chain carries N6-(pyridoxal phosphate)lysine.

The protein belongs to the serine/threonine dehydratase family. DsdA subfamily. As to quaternary structure, monomer. Pyridoxal 5'-phosphate is required as a cofactor.

It catalyses the reaction D-serine = pyruvate + NH4(+). The polypeptide is D-serine dehydratase (Salmonella paratyphi A (strain ATCC 9150 / SARB42)).